Here is a 50-residue protein sequence, read N- to C-terminus: Disintegrin pyramidin-A (50 aa).

A Disintegrin domain is found at 1–47 (DCASGPCCRDCKFLKEGTICKRARGDNMDDYCNGKTCDCPRNPHKGE). 4 disulfide bridges follow: Cys2/Cys11, Cys7/Cys32, Cys8/Cys37, and Cys20/Cys39. The Cell attachment site signature appears at 24–26 (RGD).

It belongs to the venom metalloproteinase (M12B) family. P-II subfamily. P-IIa sub-subfamily. In terms of assembly, monomer (disintegrin). In terms of tissue distribution, expressed by the venom gland.

Its subcellular location is the secreted. Functionally, inhibits ADP-induced human platelet aggregation. The sequence is that of Disintegrin pyramidin-A from Echis pyramidum leakeyi (Leakey's carpet viper).